A 379-amino-acid polypeptide reads, in one-letter code: Putative cysteine desulfurase IscS 1 (379 aa).

Residues 71 to 72, asparagine 151, glutamine 179, and 199 to 201 contribute to the pyridoxal 5'-phosphate site; these read GT and SGH. At lysine 202 the chain carries N6-(pyridoxal phosphate)lysine. Residue threonine 237 coordinates pyridoxal 5'-phosphate. The active-site Cysteine persulfide intermediate is cysteine 325. [2Fe-2S] cluster is bound at residue cysteine 325.

This sequence belongs to the class-V pyridoxal-phosphate-dependent aminotransferase family. NifS/IscS subfamily. It depends on pyridoxal 5'-phosphate as a cofactor.

The enzyme catalyses (sulfur carrier)-H + L-cysteine = (sulfur carrier)-SH + L-alanine. Catalyzes the removal of elemental sulfur from cysteine to produce alanine. The chain is Putative cysteine desulfurase IscS 1 (iscS1) from Bacillus subtilis (strain 168).